Here is a 229-residue protein sequence, read N- to C-terminus: Deoxyribose-phosphate aldolase (229 aa).

D84 acts as the Proton donor/acceptor in catalysis. K146 (schiff-base intermediate with acetaldehyde) is an active-site residue. K188 (proton donor/acceptor) is an active-site residue.

The protein belongs to the DeoC/FbaB aldolase family. DeoC type 1 subfamily.

The protein resides in the cytoplasm. It carries out the reaction 2-deoxy-D-ribose 5-phosphate = D-glyceraldehyde 3-phosphate + acetaldehyde. It functions in the pathway carbohydrate degradation; 2-deoxy-D-ribose 1-phosphate degradation; D-glyceraldehyde 3-phosphate and acetaldehyde from 2-deoxy-alpha-D-ribose 1-phosphate: step 2/2. Functionally, catalyzes a reversible aldol reaction between acetaldehyde and D-glyceraldehyde 3-phosphate to generate 2-deoxy-D-ribose 5-phosphate. This Pyrobaculum neutrophilum (strain DSM 2338 / JCM 9278 / NBRC 100436 / V24Sta) (Thermoproteus neutrophilus) protein is Deoxyribose-phosphate aldolase.